A 376-amino-acid polypeptide reads, in one-letter code: Erythronate-4-phosphate dehydrogenase (376 aa).

The substrate site is built by Ser-45 and Thr-67. Asp-147 serves as a coordination point for NAD(+). The active site involves Arg-209. Asp-233 serves as a coordination point for NAD(+). Residue Glu-238 is part of the active site. Catalysis depends on His-255, which acts as the Proton donor. Residue Gly-258 participates in NAD(+) binding. Tyr-259 serves as a coordination point for substrate.

This sequence belongs to the D-isomer specific 2-hydroxyacid dehydrogenase family. PdxB subfamily. In terms of assembly, homodimer.

The protein resides in the cytoplasm. The enzyme catalyses 4-phospho-D-erythronate + NAD(+) = (R)-3-hydroxy-2-oxo-4-phosphooxybutanoate + NADH + H(+). It participates in cofactor biosynthesis; pyridoxine 5'-phosphate biosynthesis; pyridoxine 5'-phosphate from D-erythrose 4-phosphate: step 2/5. Functionally, catalyzes the oxidation of erythronate-4-phosphate to 3-hydroxy-2-oxo-4-phosphonooxybutanoate. This is Erythronate-4-phosphate dehydrogenase from Shewanella sp. (strain ANA-3).